Here is a 571-residue protein sequence, read N- to C-terminus: Membrane protein insertase YidC (571 aa).

The helical transmembrane segment at 4-24 (TRVFLIFAWLMVAVLLWMEWS) threads the bilayer. The interval 29–76 (APTPAPTTTSAPAAAQSVPGATPGSVPNAQVPGAPGQAAVQAQASATP) is disordered. Composition is skewed to low complexity over residues 34–43 (PTTTSAPAAA) and 57–76 (AQVP…SATP). 4 helical membrane-spanning segments follow: residues 369-389 (LVGN…LVLY), 440-460 (GGCL…WVLV), 483-503 (YFIL…LTPA), and 518-538 (PLVF…YWVV).

This sequence belongs to the OXA1/ALB3/YidC family. Type 1 subfamily. As to quaternary structure, interacts with the Sec translocase complex via SecD. Specifically interacts with transmembrane segments of nascent integral membrane proteins during membrane integration.

Its subcellular location is the cell inner membrane. Its function is as follows. Required for the insertion and/or proper folding and/or complex formation of integral membrane proteins into the membrane. Involved in integration of membrane proteins that insert both dependently and independently of the Sec translocase complex, as well as at least some lipoproteins. Aids folding of multispanning membrane proteins. The sequence is that of Membrane protein insertase YidC from Stenotrophomonas maltophilia (strain R551-3).